Consider the following 68-residue polypeptide: Small ribosomal subunit protein bS21 (68 aa).

The disordered stretch occupies residues 39-68 (PPSVKRVRKKQESERRHRKERAMRRRMMEE). Basic residues predominate over residues 54 to 68 (RHRKERAMRRRMMEE).

This sequence belongs to the bacterial ribosomal protein bS21 family.

In Orientia tsutsugamushi (strain Boryong) (Rickettsia tsutsugamushi), this protein is Small ribosomal subunit protein bS21.